A 466-amino-acid polypeptide reads, in one-letter code: 23S rRNA (uracil(1939)-C(5))-methyltransferase RlmD (466 aa).

One can recognise a TRAM domain in the interval 1–54 (MVDVLNIESLDLEARGIAHRDGKVLFVEGALPGERVTVQTVRRKPSYEIAKVEE). [4Fe-4S] cluster contacts are provided by cysteine 67, cysteine 73, cysteine 76, and cysteine 155. S-adenosyl-L-methionine-binding residues include glutamine 264, phenylalanine 293, asparagine 298, glutamate 314, asparagine 342, and aspartate 363. The active-site Nucleophile is cysteine 393.

Belongs to the class I-like SAM-binding methyltransferase superfamily. RNA M5U methyltransferase family. RlmD subfamily.

The enzyme catalyses uridine(1939) in 23S rRNA + S-adenosyl-L-methionine = 5-methyluridine(1939) in 23S rRNA + S-adenosyl-L-homocysteine + H(+). In terms of biological role, catalyzes the formation of 5-methyl-uridine at position 1939 (m5U1939) in 23S rRNA. In Bordetella bronchiseptica (strain ATCC BAA-588 / NCTC 13252 / RB50) (Alcaligenes bronchisepticus), this protein is 23S rRNA (uracil(1939)-C(5))-methyltransferase RlmD.